Here is a 354-residue protein sequence, read N- to C-terminus: UDP-N-acetylglucosamine--N-acetylmuramyl-(pentapeptide) pyrophosphoryl-undecaprenol N-acetylglucosamine transferase (354 aa).

Residues 11 to 13 (TAG), R164, S194, and Q289 each bind UDP-N-acetyl-alpha-D-glucosamine.

It belongs to the glycosyltransferase 28 family. MurG subfamily.

The protein resides in the cell membrane. The catalysed reaction is di-trans,octa-cis-undecaprenyl diphospho-N-acetyl-alpha-D-muramoyl-L-alanyl-D-glutamyl-meso-2,6-diaminopimeloyl-D-alanyl-D-alanine + UDP-N-acetyl-alpha-D-glucosamine = di-trans,octa-cis-undecaprenyl diphospho-[N-acetyl-alpha-D-glucosaminyl-(1-&gt;4)]-N-acetyl-alpha-D-muramoyl-L-alanyl-D-glutamyl-meso-2,6-diaminopimeloyl-D-alanyl-D-alanine + UDP + H(+). It functions in the pathway cell wall biogenesis; peptidoglycan biosynthesis. In terms of biological role, cell wall formation. Catalyzes the transfer of a GlcNAc subunit on undecaprenyl-pyrophosphoryl-MurNAc-pentapeptide (lipid intermediate I) to form undecaprenyl-pyrophosphoryl-MurNAc-(pentapeptide)GlcNAc (lipid intermediate II). The polypeptide is UDP-N-acetylglucosamine--N-acetylmuramyl-(pentapeptide) pyrophosphoryl-undecaprenol N-acetylglucosamine transferase (Clostridium botulinum (strain ATCC 19397 / Type A)).